A 115-amino-acid chain; its full sequence is Phosphoribosyl-AMP cyclohydrolase (115 aa).

Asp80 contributes to the Mg(2+) binding site. Cys81 is a Zn(2+) binding site. Residues Asp82 and Asp84 each contribute to the Mg(2+) site. 2 residues coordinate Zn(2+): Cys97 and Cys104.

The protein belongs to the PRA-CH family. In terms of assembly, homodimer. Mg(2+) serves as cofactor. Zn(2+) is required as a cofactor.

Its subcellular location is the cytoplasm. It catalyses the reaction 1-(5-phospho-beta-D-ribosyl)-5'-AMP + H2O = 1-(5-phospho-beta-D-ribosyl)-5-[(5-phospho-beta-D-ribosylamino)methylideneamino]imidazole-4-carboxamide. The protein operates within amino-acid biosynthesis; L-histidine biosynthesis; L-histidine from 5-phospho-alpha-D-ribose 1-diphosphate: step 3/9. In terms of biological role, catalyzes the hydrolysis of the adenine ring of phosphoribosyl-AMP. This chain is Phosphoribosyl-AMP cyclohydrolase, found in Mycolicibacterium smegmatis (strain ATCC 700084 / mc(2)155) (Mycobacterium smegmatis).